A 538-amino-acid polypeptide reads, in one-letter code: Phosphoenolpyruvate carboxykinase (ATP) (538 aa).

The substrate site is built by R64, Y205, and K211. ATP is bound by residues K211, H230, and 246 to 254 (GLSGTGKTT). Mn(2+) contacts are provided by K211 and H230. Residue D267 coordinates Mn(2+). ATP is bound by residues E295, R331, 447 to 448 (RI), and T453. A substrate-binding site is contributed by R331.

It belongs to the phosphoenolpyruvate carboxykinase (ATP) family. In terms of assembly, monomer. Mn(2+) serves as cofactor.

It localises to the cytoplasm. The enzyme catalyses oxaloacetate + ATP = phosphoenolpyruvate + ADP + CO2. Its pathway is carbohydrate biosynthesis; gluconeogenesis. Its function is as follows. Involved in the gluconeogenesis. Catalyzes the conversion of oxaloacetate (OAA) to phosphoenolpyruvate (PEP) through direct phosphoryl transfer between the nucleoside triphosphate and OAA. This is Phosphoenolpyruvate carboxykinase (ATP) from Mannheimia succiniciproducens (strain KCTC 0769BP / MBEL55E).